Reading from the N-terminus, the 428-residue chain is Gamma-glutamyl phosphate reductase (428 aa).

The protein belongs to the gamma-glutamyl phosphate reductase family.

The protein localises to the cytoplasm. It carries out the reaction L-glutamate 5-semialdehyde + phosphate + NADP(+) = L-glutamyl 5-phosphate + NADPH + H(+). The protein operates within amino-acid biosynthesis; L-proline biosynthesis; L-glutamate 5-semialdehyde from L-glutamate: step 2/2. Its function is as follows. Catalyzes the NADPH-dependent reduction of L-glutamate 5-phosphate into L-glutamate 5-semialdehyde and phosphate. The product spontaneously undergoes cyclization to form 1-pyrroline-5-carboxylate. In Mesorhizobium japonicum (strain LMG 29417 / CECT 9101 / MAFF 303099) (Mesorhizobium loti (strain MAFF 303099)), this protein is Gamma-glutamyl phosphate reductase.